We begin with the raw amino-acid sequence, 255 residues long: Hydroxyacylglutathione hydrolase (255 aa).

Residues histidine 55, histidine 57, aspartate 59, histidine 60, histidine 113, aspartate 132, and histidine 170 each contribute to the Zn(2+) site.

Belongs to the metallo-beta-lactamase superfamily. Glyoxalase II family. In terms of assembly, monomer. The cofactor is Zn(2+).

The enzyme catalyses an S-(2-hydroxyacyl)glutathione + H2O = a 2-hydroxy carboxylate + glutathione + H(+). The protein operates within secondary metabolite metabolism; methylglyoxal degradation; (R)-lactate from methylglyoxal: step 2/2. In terms of biological role, thiolesterase that catalyzes the hydrolysis of S-D-lactoyl-glutathione to form glutathione and D-lactic acid. The polypeptide is Hydroxyacylglutathione hydrolase (Methylobacterium sp. (strain 4-46)).